Reading from the N-terminus, the 219-residue chain is Inner membrane protein YccA (219 aa).

Residues 1-22 (MDRIVSSSHDRTSLLSTHKVLR) are Periplasmic-facing. 2 helical membrane-spanning segments follow: residues 23–43 (NTYFLLSLTLAFSAITATAST) and 44–64 (VLMLPSPGLILTLVGMYGLMF). The Periplasmic portion of the chain corresponds to 65–73 (LTYKTANKP). The chain crosses the membrane as a helical span at residues 74-94 (TGIISAFAFTGFLGYILGPIL). The Cytoplasmic portion of the chain corresponds to 95–104 (NTYLSAGMGD). A helical transmembrane segment spans residues 105–125 (VIAMALGGTALVFFCCSAYVL). At 126–133 (TTRKDMSF) the chain is on the periplasmic side. The helical transmembrane segment at 134–154 (LGGMLMAGIVVVLIGMVANIF) threads the bilayer. The Cytoplasmic segment spans residues 155 to 157 (LQL). A helical membrane pass occupies residues 158–178 (PALHLAISAVFILISSGAILF). At 179 to 195 (ETSNIIHGGETNYIRAT) the chain is on the periplasmic side. A helical membrane pass occupies residues 196 to 216 (VSLYVSLYNIFVSLLSILGFA). At 217–219 (SRD) the chain is on the cytoplasmic side.

It belongs to the BI1 family.

The protein localises to the cell inner membrane. The protein is Inner membrane protein YccA (yccA) of Escherichia coli O6:H1 (strain CFT073 / ATCC 700928 / UPEC).